Reading from the N-terminus, the 317-residue chain is MPDSRPDTELSNPQSAKAPLDPHLKALENESIHIFREVAAEFERPVMLYSIGKDSSVLLHLARKAFYPGRVPFPLLHVNTGWKFREMIAFRDETAKKYDLDLIEHINPRGAAENITPFTHGSAAFTDIMKTESLRQALDAGQFDAAFGGARRDEEASRAKERIYSFRTPDHRWDPRNQRPELWNVYNGMIRKGESVRAFPLSNWTEVDIWRYIQAEDIPLVPLYYAKMRKFVERDGMMILAEDPRLELLPGEVRQEGMIRFRTLGDFPLTGAIRSQATTLQEVIAELEIATVSERQGRAIDRDQSGSMEKKKREGYF.

Disordered regions lie at residues 1–21 and 298–317; these read MPDS…APLD and RAID…EGYF.

The protein belongs to the PAPS reductase family. CysD subfamily. As to quaternary structure, heterodimer composed of CysD, the smaller subunit, and CysN.

It carries out the reaction sulfate + ATP + H(+) = adenosine 5'-phosphosulfate + diphosphate. The protein operates within sulfur metabolism; hydrogen sulfide biosynthesis; sulfite from sulfate: step 1/3. With CysN forms the ATP sulfurylase (ATPS) that catalyzes the adenylation of sulfate producing adenosine 5'-phosphosulfate (APS) and diphosphate, the first enzymatic step in sulfur assimilation pathway. APS synthesis involves the formation of a high-energy phosphoric-sulfuric acid anhydride bond driven by GTP hydrolysis by CysN coupled to ATP hydrolysis by CysD. This Rhizobium etli (strain CIAT 652) protein is Sulfate adenylyltransferase subunit 2.